A 141-amino-acid chain; its full sequence is Large ribosomal subunit protein uL11 (141 aa).

It belongs to the universal ribosomal protein uL11 family. In terms of assembly, part of the ribosomal stalk of the 50S ribosomal subunit. Interacts with L10 and the large rRNA to form the base of the stalk. L10 forms an elongated spine to which L12 dimers bind in a sequential fashion forming a multimeric L10(L12)X complex. One or more lysine residues are methylated.

Its function is as follows. Forms part of the ribosomal stalk which helps the ribosome interact with GTP-bound translation factors. This is Large ribosomal subunit protein uL11 from Nostoc sp. (strain PCC 7120 / SAG 25.82 / UTEX 2576).